The primary structure comprises 207 residues: Claudin-11 (207 aa).

Residue methionine 1 is a topological domain, cytoplasmic. Residues 2 to 22 (VATCLQVVGFVTSFVGWIGII) form a helical membrane-spanning segment. Over 23-82 (VTTSTNDWVVTCSYTIPTCRKMDELGSKGLWADCVMATGLHHCKPLVDILILPGYAQACR) the chain is Extracellular. The chain crosses the membrane as a helical span at residues 83–103 (ALMIAASVLGLPGILLLLTVL). Topologically, residues 104 to 122 (PCIRMGHEPGVAKYRRAQL) are cytoplasmic. The chain crosses the membrane as a helical span at residues 123–143 (AGVLLILLALCAIVATIWFPV). The Extracellular portion of the chain corresponds to 144-157 (CAHREITIVSFGYS). The helical transmembrane segment at 158–178 (LYAGWIGAVMCLVGGCVIVCC) threads the bilayer. The Cytoplasmic segment spans residues 179–207 (SGDAQSFGENRFYYSSGSSSPTHAKSAHV). Phosphoserine is present on residues serine 193, serine 194, serine 197, and serine 198.

This sequence belongs to the claudin family. Interacts with tetraspanin-3/TSPAN3. Interacts with OCLN.

It localises to the cell junction. The protein resides in the tight junction. Its subcellular location is the cell membrane. Its function is as follows. Plays a major role in tight junction-specific obliteration of the intercellular space, through calcium-independent cell-adhesion activity. This chain is Claudin-11 (Cldn11), found in Rattus norvegicus (Rat).